Here is a 295-residue protein sequence, read N- to C-terminus: MRWLITGAAGMLGRELVRRLAENEEDVAALGHDHLDVTRPSAVRAALAEHRPGIVVNCAAYTAVDDAETDEAAAALLNAEAPRLLAEGLRPHRRHGLVHLSTDYVFPGDARTPYAEDHPTAPRSAYGRTKRDGEQAVLTALPTATVLRTAWLYGRTGRSFVRTMIEREARGGAIDVVADQRGQPTWTGDLADRIIAVGRHPGVHGILHATNAGSATWYDLAQEVFRLLDADPGRVRPTTGAAFRRPAPRPAYSVLGHDRWRGTGLAPLRDWRSALREAFPDILAAEHPPTRRGAA.

NADH contacts are provided by residues 10-12 (GML), 36-37 (DV), 60-62 (AYT), Y126, and K130. NADPH contacts are provided by residues 11 to 12 (ML), 36 to 37 (DV), 60 to 62 (AYT), Y126, and K130. The Proton donor/acceptor role is filled by Y126.

This sequence belongs to the dTDP-4-dehydrorhamnose reductase family. Requires Mg(2+) as cofactor.

It participates in antibiotic biosynthesis. In terms of biological role, involved in the biosynthesis of one of the two 2,6-deoxysugars, dTDP-L-oleandrose, attached to the macrolactone ring oleandolide to produce the aglycone antibiotic oleandomycin. Probably catalyzes the reduction of dTDP-4-keto-2,6-dideoxy-beta-L-galactose to yield dTDP-L-olivose. The chain is Probable dTDP-4,6-dihydroxy-2-methyloxan-3-one 4-ketoreductase from Streptomyces antibioticus.